A 477-amino-acid chain; its full sequence is MSNVTVCVRFRPLSHKERKTNGDKVCFKRLDSESFVFKDEREEDVIFSFDRVFYEDAEQSDVYNFLAVPIVADAISGINGTIITYGQTGAGKTYSMEGPSILHCNKQKTGLVQRVVDELFQSLQSSESMAMWSVKLSMVEIYLEKVRDLLDLSKDNLQIKESKTQGIYISGATEVSIQNSSDALECLSEGIANRAVGETQMNLASSRSHCLYIFSVQQGSTSDERVRGGKIILVDLAGSEKVEKTGAEGRVLDEAKTINKSLSVLGNVVNALTTGKPNHVPYRDSKLTRILQDALGGNSRAALLCCCSPSASNAPESLSTVRFGTRTKLIKTTPKSISPEVDSIKKPIPDSHGQNDLRDRILNKLRLSLKEEDVDLLEELFVQEGIIFDPNYSVADIDSACQDAASQEVSLLTQAVEELKETVEELTDENERLRGELELAQEAAAAAAAARADGALLGFVPAVAISSLLRPFGFVPD.

The Kinesin motor domain occupies 3–330 (NVTVCVRFRP…VRFGTRTKLI (328 aa)). 86-93 (GQTGAGKT) contributes to the ATP binding site. Residues 402–451 (QDAASQEVSLLTQAVEELKETVEELTDENERLRGELELAQEAAAAAAAAR) adopt a coiled-coil conformation.

It belongs to the TRAFAC class myosin-kinesin ATPase superfamily. Kinesin family. KIN-1 subfamily. In terms of tissue distribution, widely expressed. Expressed in young roots and leaves, in mature roots, culm, sheath and leaves, and in panicles at various developmental stages. Strongest expression is detected in panicles. In the panicle, expression is detected in anthers, glumme, lemma and palea. In the spikelet, expression is detected in both microsporocyte and the anther walls.

The protein resides in the cytoplasm. In terms of biological role, kinesin-like motor protein that exhibits microtubule-stimulated ATPase activity. Plays an essential role in male meiotic chromosomal dynamics, male gametogenesis and anther dehiscence. May play a minor and nonessential role in regulating meiotic spindle formation. The polypeptide is Kinesin-like protein KIN-1 (Oryza sativa subsp. japonica (Rice)).